The sequence spans 1033 residues: MSGSFWKFGQDYSIESPVSKILNSAFIKINKDQDDDVPTGTCEENIADDEDNSSHDYAASEDNVVNENEEKEEENTLPTTESEYENYRPNLDVLDDLLDDDELYTELMCSNFKLLIFLKYPEVLSKLIEYVTNEKILDEETDSAKKPEIIEGVNDHPILIERDRKDKKEDAEEGGDSEETTNDSDHDSGDERSVDSEETSITLPPESEEQVETRRARIAAEILSADVWPISAAIMQNKDLLGRLWSILDHPAPLPIPASTYFMKINERLLDMDITGMLEFILSRDSLVARFLTHVDNPSLMDFLLKVISTDKPDSPTGVIKILKSQELIPKLLDHLNPEYGISTQSAAGDFIKAFVTLSTNSSNELASGIGPNELTRQLVSEEMIEKLIKIMLKGGTSLSNGVGIIIELIRKNNSDYDFIQLVYTTLESHPPTDRDPIHLIHLVKLFAKHMPDFADMLDKTKLPLMEMPFGNIEPLGFERFKICELIAELLHCSNMTLLNEPNGEMIAQERDIERAKELETSTEKENITFIVDNKSSYYDKDCVEKDITENLGALQINNQGSEEDELNDTGVSSVKLDVKSDAKVVEGLENDASGVELYDETLSDTESVRECLREKPLVGDRLKIALEDTKILISILDMFTEFPWNNFLHNVIFDIAQQIFNGPLKTGYNRFLLKDYLVDAYLTKKIVDADKACQDYEKKTGLRYGYMGHLTLVAEEISKFKEYIDEMKLTFCNTAVSDRLEEPFWKEYSETILADTREKYNTVLGDFGNDQESDDDVIRNSDSEDIIGDTEGNENYGNGENDELLSNGHDSGNMDLYYNFNNNENEENEEDYAEYSDVDNKNYYNNVETNDDDYDSDDGKSKSAESEFTDKISEHRDGNSLYNEDNDENGSDKWTSGTSLFPPDHFPSRSQPSDPKLQDQNIFHHQFDFEGVGDDDDYMDPNDDGQSYARPGNPLYTTPKTPPRPKTILFNSLSALDNNGEDEEVALGTSVDDRMDNEISSDEEDSEDEDEENDMGNEEGYSLYRSRSKEAF.

Disordered regions lie at residues 32 to 82, 147 to 213, 768 to 813, and 828 to 1033; these read DQDD…TTES, PEII…QVET, FGND…HDSG, and ENEE…KEAF. A compositionally biased stretch (basic and acidic residues) spans 158-170; the sequence is ILIERDRKDKKED. Residues 171-182 are compositionally biased toward acidic residues; the sequence is AEEGGDSEETTN. The span at 183–195 shows a compositional bias: basic and acidic residues; sequence DSDHDSGDERSVD. Residue serine 774 is modified to Phosphoserine. 2 stretches are compositionally biased toward acidic residues: residues 784–793 and 828–838; these read SEDIIGDTEG and ENEEDYAEYSD. A phosphoserine mark is found at serine 857, serine 862, and serine 892. Basic and acidic residues predominate over residues 858 to 879; that stretch reads DDGKSKSAESEFTDKISEHRDG. Positions 909–924 are enriched in polar residues; the sequence is SRSQPSDPKLQDQNIF. Acidic residues predominate over residues 932 to 944; sequence GVGDDDDYMDPND. A Phosphothreonine modification is found at threonine 990. At serine 991 the chain carries Phosphoserine. Positions 1000 to 1018 are enriched in acidic residues; that stretch reads ISSDEEDSEDEDEENDMGN.

Belongs to the SAPS family. As to quaternary structure, associates with the SIT4 protein phosphatase catalytic subunit in a cell-cycle-dependent manner. In terms of processing, hyperphosphorylated in the absence of SIT4.

It localises to the cytoplasm. Its function is as follows. Positive regulator of protein phosphatase SIT4. Involved in the general amino acid control (GAAC) response regulated by TOR. Involved in the dephosphorylation of the elongator complex subunit IKI3. The polypeptide is SIT4-associating protein SAP190 (SAP190) (Saccharomyces cerevisiae (strain AWRI1631) (Baker's yeast)).